Here is a 275-residue protein sequence, read N- to C-terminus: Probable siderophore transport system ATP-binding protein YusV (275 aa).

Residues Ile-6 to Asn-242 form the ABC transporter domain. Residue Gly-38–Ser-45 coordinates ATP.

The protein belongs to the ABC transporter superfamily. The iron-hydroxamate siderophore complex is composed of one ATP-binding protein (YusV), two transmembrane proteins (YfiZ and YfhA) and a solute-binding protein (YfiY); the catechoplate siderophore complex is composed of one ATP-binding protein (YusV), two transmembrane proteins (FeuB and FeuC) and a solute-binding protein (FeuA).

Its subcellular location is the cell membrane. Its function is as follows. Provides the ATPase subunit for at least 2 ABC transporter complexes; YfiYZ/YfhA/YusV involved in import of the iron-hydroxamate siderophores schizokinen, arthrobactin and corprogen, and FeuABC/YusV involved in import of the catecholate siderophores bacillibactin and enterobactin. Probably responsible for energy coupling to the transport system. The polypeptide is Probable siderophore transport system ATP-binding protein YusV (yusV) (Bacillus subtilis (strain 168)).